A 95-amino-acid chain; its full sequence is Integration host factor subunit beta (95 aa).

Belongs to the bacterial histone-like protein family. Heterodimer of an alpha and a beta chain.

In terms of biological role, this protein is one of the two subunits of integration host factor, a specific DNA-binding protein that functions in genetic recombination as well as in transcriptional and translational control. This chain is Integration host factor subunit beta, found in Shewanella sp. (strain ANA-3).